The following is a 296-amino-acid chain: NAD kinase (296 aa).

Asp74 functions as the Proton acceptor in the catalytic mechanism. NAD(+)-binding positions include 74-75 (DG), 148-149 (ND), Arg176, Asp178, and 189-194 (TAYALS).

It belongs to the NAD kinase family. A divalent metal cation is required as a cofactor.

The protein localises to the cytoplasm. The catalysed reaction is NAD(+) + ATP = ADP + NADP(+) + H(+). Its function is as follows. Involved in the regulation of the intracellular balance of NAD and NADP, and is a key enzyme in the biosynthesis of NADP. Catalyzes specifically the phosphorylation on 2'-hydroxyl of the adenosine moiety of NAD to yield NADP. This Nitrosomonas eutropha (strain DSM 101675 / C91 / Nm57) protein is NAD kinase.